The sequence spans 310 residues: Prostate androgen-regulated mucin-like protein 1 homolog (310 aa).

Residues 1 to 20 (MVYKTLFALCILTAGWRVQS) form the signal peptide. Over 21–258 (LPTSAPLSVS…EVEHALSSGS (238 aa)) the chain is Extracellular. Polar residues predominate over residues 40 to 74 (TIWTSSPQNTDADTASPSNGTHNNSVLPVTASAPT). Residues 40–224 (TIWTSSPQNT…VPQEKTPPTT (185 aa)) are disordered. Residues N58, N62, and N80 are each glycosylated (N-linked (GlcNAc...) asparagine). Positions 92 to 103 (SPGSNWEGTNTD) are enriched in polar residues. The segment covering 150 to 209 (SPQAPASSPSSLSTSPPEVFSVSVTTNHSSTVTSTQPTGAPTAPESPTEESSSDHTPTSH) has biased composition (low complexity). An N-linked (GlcNAc...) asparagine glycan is attached at N176. The chain crosses the membrane as a helical span at residues 259 to 279 (IAAITVTVIAVVLLVFGVAAY). The Cytoplasmic segment spans residues 280–310 (LKIRHSSYGRLLDDHDYGSWGNYNNPLYDDS). S298 is modified (phosphoserine).

Belongs to the PARM family. Post-translationally, highly N-glycosylated and O-glycosylated.

It is found in the cell membrane. Its subcellular location is the golgi apparatus membrane. The protein localises to the endosome membrane. May regulate TLP1 expression and telomerase activity, thus enabling certain prostatic cells to resist apoptosis. The chain is Prostate androgen-regulated mucin-like protein 1 homolog (PARM1) from Pongo abelii (Sumatran orangutan).